A 361-amino-acid chain; its full sequence is DNA replication and repair protein RecF (361 aa).

G30–T37 is a binding site for ATP.

This sequence belongs to the RecF family.

It is found in the cytoplasm. The RecF protein is involved in DNA metabolism; it is required for DNA replication and normal SOS inducibility. RecF binds preferentially to single-stranded, linear DNA. It also seems to bind ATP. This Clostridium botulinum (strain Alaska E43 / Type E3) protein is DNA replication and repair protein RecF.